The following is a 3479-amino-acid chain: MANRRVGRGCWEVSPTERRPPAALRGPATEEEASSPPVLFLSHFCRSPFLCFGDVLLGDSRTLPLALDNPNEEVAEVKISHFPAADLGFSVSQRCFVLQPKEKIVISVNWTPFKEGRVREIMTFLVNDVLKHQAILLGNAEKQKKKKRSLWDTIKKKKISASTSHNRRVSNIQNVNKTFSVSQKVDRVRSPLQACENLAMNEGGPPTENNSLTLEENKIPISPISPAFNECHGATCLPLSVRRSTTYSSLHASENRELLNVDSANVSKVSFNEKAVTETSFNSINVNDQSGENSKLILTPNYSSTLNITQSQINFLSPDSFVNNSHGANNELELVTCLSSDMFMTDNSKPVHLQSTTAHEIYQKILSPDSFIKDNYGLNQDLESESVNPILSPNQFLKDNMAYMCTSQQTYKVPLSNENSQVPQSPQDWSKSEVSPCIPEYQGSKSPKAIFEELVEMKSNYYSFIKQNNPKFSAVQDISSHSHDKQPKRRPILSATVTKRKPTCTRENQTEINKPKAKRCLNSAVGEHEKVIHNQKEKEDFHSYLPVIDPVLSKSKSYKNQIMPSLTTASVARKRKSDGSMEDANVRVAVTEHTEEREIKRIHFSPSEPKTSAVKKTKNVITPISKCISNREKLNLKKKTDLLIFKTPISKTSKRTKPIIAVAQSNLTFIKPLKTDIPRHPMPFAAKNMFYDERWKEKQEQGFTWWLNFILTPDDFTVKTNISEVNAATLLLGVENQHKISVPRAPTKEEMSLRAYTARCRLNRLRRAACRLFTSEKMVKAIKKLEIEIEARRLIVRKDRHLWKDVGERQKVLNWLLSYNPLWLRIGLETIYGELISLEDNSDVTGLAMFILNRLLWNPDIAAEYRHPTVPHLYRDGHEGALSKFTLKKLLLLICFLDYAKISKLIDHDPCLFCKDAEFKASKEILLAFSRDFLSGEGDLSRHLGLLGLPVNHVQTPFDEFDFAITNLAVDLQCGVRLVRTMELLTQNWNLSKKLRIPAISRLQKMHNVDIVLQVLKSRGIELSDEHGNTILSKDIVDRHREKTLRLLWKIAFAFQVDISLNLDQLKEEIAFLKHTKSIKKTISLLSCHSDALINKKKGKRDSGSFEQYSENIKLLMDWVNAVCAFYNKKVENFTVSFSDGRVLCYLIHHYHPCYVPFDAICQRTTQTVECTQTGSVVLNSSSESDDSSLDMSLKAFDHENTSELYKELLENEKKNFQLIRSAVRDLGGIPAMINHSDMSNTIPDEKVVITYLSFLCARLLDLRKEIRAARLIQTTWRKYKLKTDLKRHQERDKAARIIQSAVINFLAKQRLRKRVNAALIIQKYWRRVLAQRKLLILKKEKLEKVQNKAASLIQGYWRRYSTRKRFLKLKYYSIILQSRIRMIIAVTSYKRYLWATVTIQRHWRAYLRRKQDQQRYEMLKSSSLIIQSMFRKWKRRKMQSQVKATVILQRAFREWHLRKRAKEENSAIVIQSWYRMHKELRKYIYIRSCVIVIQKRFRCFQAQKLYKRKKESILTIQKYYKAYLKGKIERTNYLQKRAAAIQLQAAFRRLKAHNLCRQIRAACVIQSYWRMRQDRVRFLNLKKTIIKLQAHIRKHQQLQKYKKMKKAAVIIQTHFRAYIFTRKVLASYQKTRSAVIVLQSAYRGMQARKVYIHILTSVIKIQSYYRAYVSKKEFLSLKNTTIKLQSIVKMKQTRKQYLHLRAAALFIQQCYRSKKITTQKREEYMQMRESCIKLQAFVRGYLVRKQMRLQRKAVISLQSYFRMRKARQYYLKMCKAIMVIQNYYHAYKAQVNQRKNFLRVKKAATCLQAAYRGYKVRQLIKQQSIAALKIQSAFRGYNKRVKYQSVLQSIIKIQRWYRAYKTLHDTRTHFLKTKAAVVSLQSAYRGWKVRKQIRREHQAALKIQSAFRMAKAQKQFRLFKTAALVIQQNFRAWTAGRKQRMEYIELRHAVLILQSMWKGKTLRRQLQRQHKCAIIIQSYYRMHVQQKKWKIMKKAALLIQKYYKAYSIGREQHHLYLKTKAAVVTLQSAYRGMKVRKRIKDCNKAAVTIQSKYRAYKTKKKYATYRASAIIIQRWYRGIKITHRQHQEYLNLKKTAIKIQSVYRGIRVRRHIQHMHRAATFIKAMFKMHQSRISYHTMRKAAIVIQVRFRAYYQGKMHREKYLTILKAVKILQASFRGVRVRWTLRKMQIAATLIQSNYRRYKQQTYFNKLKKITKTIQQRYRAVKERNIQFKRYNKLRHSVIYIQAIFRGKKARRHLKMMHVAATLIQRRFRTLMMRRRFLSLKKTAVWIQRKYRAHLCTKHHLQFLQVQNAVIKIQSSYRRWMIRKKMREMHRAATFIQATFRMHRVHMRYQALKQASVVIQQQYRANRAAKLQRQHYLRQRRSAVILQAAFRGVKTRRHLKSMHSSATLIQSRFRSLLVRRRFISLKKATIFVQRKYRATICAKHKLHQFLQLRKAAITIQSSYCTIRRLMVKKKLQEMQRAAVLIQATFRMHRTCVTFQTWKQASILIQQHYRTYRAAKLQKENYIRQWHSAVVIQTAYKGMKARQHLREKHKAAIIIQSTYRMYRQYCFYQKLQWATKIIQEKYRANKKKQKALQHNELKKETCVQASFQDMNIQKQIQEQHQAAIIIQKHCKAFKIRKHYLHLRATVVSIQRRYRKLTAVRTQAVICIQSYYRGFKVRRDIQNMHRAATLIQSFYRMHRAKVDYQTKKTAIVVIQNYYRLYVRVKTERKSFLPVQKSVRTIQAAFRGMKVRQKLKIVSEEKMAAIVNQSALCCYRSKTQYEAVQSEGVMIQEWYKASDLACSQEAECHSQSRAAVTIQNAFRRMVTRKLETQKCAALRIQFFLQMAVYRRRFVQQKRAAITLQHYFRTWQTRKQFLLYRKAAVVLQNHYRAFLSAKHQRQVYLQIRSSVIIIQARSKGFIQKRKFQEIKNSTIKIQAMWRRYRAKKYLCKVKAACKIQAWYRCWRAHKEYLAILKAVKIIQGCFYTKLERTWFLNVRASAIIIQRKWRAILSAKIAHEHFLMIKRHRAACLIQAHYRGYKERQVFLRQKSAALIIQKYIRAREAGKRERIKYIEFKKSTVILQALVRGWLVRKRILEQKTKIRLLHFTAAAYYHLNALRIQRAYKLYLAVKNANKQVNSVICIQRWFRARLQQKKFIQKYSIKKIEHEGQECLSQQNRAASVIQKAVRHFVLRKKQEKFTSGIIKIQALWRGYSWRKKNDCTKIKAIRLSLQVVNREIREENKLYKRTALALHYLLTYKHLSAILEALKHLEVVTRLSPLCCENMAQSGAISKIFVLIRSCNRSVPCMEVIRYAVQVLLNVSKYEKTTSAVYDVENCIDTLLELLQIYREKPGNKVADKGGSIFTKTCCLLAVLLKTTNRASDVRSRSKVVDRIYSLYKLTAHKHKMNTERILHKQKKNSSISIPFIPETPVRTRIVSRLKPDWVLRRDNMEEITNPLQAIQMVMDTLGIPY.

The tract at residues 1-29 is disordered; the sequence is MANRRVGRGCWEVSPTERRPPAALRGPAT. Phosphoserine is present on residues serine 280, serine 283, serine 367, serine 392, serine 425, and serine 605. The 137-residue stretch at 920 to 1056 folds into the Calponin-homology (CH) 1 domain; that stretch reads KASKEILLAF…LLWKIAFAFQ (137 aa). Residues 1057 to 1078 adopt a coiled-coil conformation; that stretch reads VDISLNLDQLKEEIAFLKHTKS. Serine 1103 bears the Phosphoserine mark. The Calponin-homology (CH) 2 domain maps to 1110–1261; it reads SENIKLLMDW…YLSFLCARLL (152 aa). IQ domains are found at residues 1347-1378, 1393-1422, 1582-1613, 1605-1634, 1632-1661, 1655-1684, 1728-1757, 1751-1782, 1801-1830, 1824-1853, 1874-1903, 1897-1928, 1947-1978, 1970-2001, 2020-2049, 2043-2074, 2093-2124, 2116-2147, 2239-2270, 2262-2293, 2311-2342, 2334-2365, 2384-2415, 2407-2438, 2533-2564, 2627-2656, 2668-2699, 2691-2722, 2741-2770, 2817-2848, 2862-2893, 2912-2941, 2935-2966, 2957-2988, 3032-3063, 3082-3113, and 3206-3237; these read QNKA…IILQ, YLWA…MLKS, LKKT…VIIQ, MKKA…KTRS, TRSA…SVIK, ILTS…TTIK, MRES…AVIS, QRKA…MVIQ, VKKA…AALK, QSIA…SIIK, TKAA…AALK, EHQA…LVIQ, LRHA…IIIQ, QHKC…LLIQ, TKAA…AAVT, CNKA…IIIQ, LKKT…TFIK, MHRA…IVIQ, LRHS…TLIQ, MHVA…VWIQ, VQNA…TFIQ, MHRA…VVIQ, QRRS…TLIQ, MHSS…IFVQ, QWHS…IIIQ, QHQA…TVVS, RTQA…TLIQ, VQKS…EKMA, QSRA…RIQF, QKRA…VVLQ, IRSS…STIK, IKNS…KIQA, KVKA…KIIQ, RHRA…LIIQ, FKKS…RLLH, and FTSG…IRLS.

It localises to the cytoplasm. It is found in the cytoskeleton. The protein resides in the spindle. The protein localises to the nucleus. Functionally, probable role in mitotic spindle regulation and coordination of mitotic processes. May have a preferential role in regulating neurogenesis. The polypeptide is Abnormal spindle-like microcephaly-associated protein homolog (ASPM) (Macaca mulatta (Rhesus macaque)).